A 274-amino-acid chain; its full sequence is NH(3)-dependent NAD(+) synthetase (274 aa).

46 to 53 (GISGGQDS) is a binding site for ATP. A Mg(2+)-binding site is contributed by D52. R140 serves as a coordination point for deamido-NAD(+). T160 contributes to the ATP binding site. Mg(2+) is bound at residue E165. Residues K173 and D180 each contribute to the deamido-NAD(+) site. ATP contacts are provided by K189 and T211. Deamido-NAD(+) is bound at residue 260 to 261 (HK).

Belongs to the NAD synthetase family. Homodimer.

It carries out the reaction deamido-NAD(+) + NH4(+) + ATP = AMP + diphosphate + NAD(+) + H(+). It functions in the pathway cofactor biosynthesis; NAD(+) biosynthesis; NAD(+) from deamido-NAD(+) (ammonia route): step 1/1. In terms of biological role, catalyzes the ATP-dependent amidation of deamido-NAD to form NAD. Uses ammonia as a nitrogen source. In Streptococcus pyogenes serotype M18 (strain MGAS8232), this protein is NH(3)-dependent NAD(+) synthetase.